The sequence spans 441 residues: Xaa-Pro dipeptidase (441 aa).

Mn(2+)-binding residues include Asp244, Asp255, His336, Glu381, and Glu420.

Belongs to the peptidase M24B family. Bacterial-type prolidase subfamily. Mn(2+) is required as a cofactor.

The enzyme catalyses Xaa-L-Pro dipeptide + H2O = an L-alpha-amino acid + L-proline. Functionally, splits dipeptides with a prolyl residue in the C-terminal position. The protein is Xaa-Pro dipeptidase of Xanthomonas campestris pv. campestris (strain 8004).